Consider the following 204-residue polypeptide: Distal tail protein pb9 (204 aa).

In terms of assembly, homohexamer. Interacts with baseplate tube protein p140 and baseplate hub protein pb3.

Its subcellular location is the virion. Functionally, forms the simplified baseplate, together with the p132 collar protein, the baseplate tube protein p140 and baseplate hub protein pb3. The polypeptide is Distal tail protein pb9 (D16) (Escherichia phage T5 (Enterobacteria phage T5)).